Reading from the N-terminus, the 224-residue chain is Ribose-5-phosphate isomerase A (224 aa).

Substrate-binding positions include threonine 34–threonine 37, aspartate 87–aspartate 90, and lysine 100–glycine 103. Residue glutamate 109 is the Proton acceptor of the active site. Residue lysine 127 coordinates substrate.

The protein belongs to the ribose 5-phosphate isomerase family. Homodimer.

It carries out the reaction aldehydo-D-ribose 5-phosphate = D-ribulose 5-phosphate. Its pathway is carbohydrate degradation; pentose phosphate pathway; D-ribose 5-phosphate from D-ribulose 5-phosphate (non-oxidative stage): step 1/1. Its function is as follows. Catalyzes the reversible conversion of ribose-5-phosphate to ribulose 5-phosphate. This chain is Ribose-5-phosphate isomerase A, found in Francisella tularensis subsp. tularensis (strain FSC 198).